A 501-amino-acid chain; its full sequence is Solute carrier family 2, facilitated glucose transporter member 5 (501 aa).

N-acetylmethionine is present on Met-1. Residues 1-18 (MEQQDQSMKEGRLTLVLA) lie on the Cytoplasmic side of the membrane. A helical membrane pass occupies residues 19–39 (LATLIAAFGSSFQYGYNVAAV). Tyr-32 lines the D-fructose pocket. Residues 40–68 (NSPALLMQQFYNETYYGRTGEFMEDFPLT) are Extracellular-facing. N-linked (GlcNAc...) asparagine glycosylation is present at Asn-51. A helical membrane pass occupies residues 69 to 91 (LLWSVTVSMFPFGGFIGSLLVGP). The Cytoplasmic portion of the chain corresponds to 92–98 (LVNKFGR). Residues 99 to 119 (KGALLFNNIFSIVPAILMGCS) form a helical membrane-spanning segment. The Extracellular portion of the chain corresponds to 120–126 (RVAKSFE). The helical transmembrane segment at 127 to 149 (LIIISRLLVGICAGVSSNVVPMY) threads the bilayer. The Cytoplasmic portion of the chain corresponds to 150-161 (LGELAPKNLRGA). A helical transmembrane segment spans residues 162-182 (LGVVPQLFITVGILVAQIFGL). A D-fructose-binding site is contributed by Gln-167. Over 183–192 (RNLLANVDGW) the chain is Extracellular. Residues 193–213 (PILLGLTGVPAALQLVLLPFF) traverse the membrane as a helical segment. Residues 214–277 (PESPRYLLIQ…LFRMRSLRWQ (64 aa)) lie on the Cytoplasmic side of the membrane. Residues 278-298 (LLSIIVLMGGQQLSGVNAIYY) traverse the membrane as a helical segment. D-fructose-binding positions include Gln-288 and 296 to 298 (IYY). Over 299-313 (YADQIYLSAGVPKEH) the chain is Extracellular. Residues 314 to 334 (VQFVTAGTGAVNVVMTFCAVF) traverse the membrane as a helical segment. Residues 335–342 (VVELLGRR) are Cytoplasmic-facing. A helical membrane pass occupies residues 343–363 (LLLLLGFSICLVACCVLTAAL). Over 364–371 (ALQDTVSW) the chain is Extracellular. A helical transmembrane segment spans residues 372–394 (MPYISIVCVISYVIGHALGPSPI). D-fructose is bound at residue His-387. Residues 395–412 (PALLITEIFLQSSRPSAF) lie on the Cytoplasmic side of the membrane. Residues 413–433 (MVGGSVHWLSNFTVGLIFPFI) traverse the membrane as a helical segment. 419–420 (HW) serves as a coordination point for D-fructose. At 434 to 439 (QEGLGP) the chain is on the extracellular side. Residues 440–460 (YSFIVFAVICLLTTIYIFLIV) traverse the membrane as a helical segment. Over 461–501 (PETKAKTFIEINQIFTKMNKVSEVYPEKEELKELPPVTLEQ) the chain is Cytoplasmic.

Belongs to the major facilitator superfamily. Sugar transporter (TC 2.A.1.1) family. Glucose transporter subfamily.

The protein localises to the apical cell membrane. It localises to the cell membrane. It is found in the sarcolemma. It carries out the reaction D-fructose(out) = D-fructose(in). Functions as a fructose transporter that has only low activity with other monosaccharides. Can mediate the uptake of deoxyglucose, but with low efficiency. Essential for fructose uptake in the small intestine. Plays a role in the regulation of salt uptake and blood pressure in response to dietary fructose. Required for the development of high blood pressure in response to high dietary fructose intake. This chain is Solute carrier family 2, facilitated glucose transporter member 5, found in Pongo abelii (Sumatran orangutan).